An 804-amino-acid chain; its full sequence is RasGAP-activating-like protein 1 (804 aa).

2 C2 domains span residues 1–105 and 116–231; these read MAKS…DSWI and VQGE…KGWF. 10 residues coordinate Ca(2+): Asp21, Asp27, Asp74, Asp76, Asp82, Asp149, Asp155, Asp202, Asp204, and Asp210. One can recognise a Ras-GAP domain in the interval 317 to 545; that stretch reads GLAGRFLDYL…SRVRDFLDRL (229 aa). Positions 565 to 672 constitute a PH domain; it reads AIVREGYLLK…WLSALRKASA (108 aa). A Btk-type zinc finger spans residues 674–710; that stretch reads NPNKLAACHPGAFRSARWTCCLQAERSAAGCSRTHSA. Zn(2+)-binding residues include His682, Cys693, Cys694, and Cys704.

It depends on Ca(2+) as a cofactor. In terms of tissue distribution, highly expressed in thyroid and adrenal medulla, lower expression in brain, spinal cord and trachea. Expressed in melanocytes.

Functionally, probable inhibitory regulator of the Ras-cyclic AMP pathway. Plays a role in dendrite formation by melanocytes. This Homo sapiens (Human) protein is RasGAP-activating-like protein 1.